The sequence spans 232 residues: Ribosomal RNA small subunit methyltransferase G (232 aa).

S-adenosyl-L-methionine contacts are provided by residues Gly75, Phe80, 126-127 (AE), and Arg143.

Belongs to the methyltransferase superfamily. RNA methyltransferase RsmG family.

It localises to the cytoplasm. In terms of biological role, specifically methylates the N7 position of a guanine in 16S rRNA. The polypeptide is Ribosomal RNA small subunit methyltransferase G (Fusobacterium nucleatum subsp. nucleatum (strain ATCC 25586 / DSM 15643 / BCRC 10681 / CIP 101130 / JCM 8532 / KCTC 2640 / LMG 13131 / VPI 4355)).